Consider the following 70-residue polypeptide: Small ribosomal subunit protein bS21 (70 aa).

Belongs to the bacterial ribosomal protein bS21 family.

The chain is Small ribosomal subunit protein bS21 from Sulfurimonas denitrificans (strain ATCC 33889 / DSM 1251) (Thiomicrospira denitrificans (strain ATCC 33889 / DSM 1251)).